The following is a 101-amino-acid chain: NAD(P)H-quinone oxidoreductase subunit 4L, chloroplastic (101 aa).

The next 3 helical transmembrane spans lie at 2–22 (MFER…YGLI), 32–52 (ICLE…SDLF), and 61–81 (IFAI…LSIL).

This sequence belongs to the complex I subunit 4L family. As to quaternary structure, NDH is composed of at least 16 different subunits, 5 of which are encoded in the nucleus.

It is found in the plastid. It localises to the chloroplast thylakoid membrane. It catalyses the reaction a plastoquinone + NADH + (n+1) H(+)(in) = a plastoquinol + NAD(+) + n H(+)(out). The catalysed reaction is a plastoquinone + NADPH + (n+1) H(+)(in) = a plastoquinol + NADP(+) + n H(+)(out). In terms of biological role, NDH shuttles electrons from NAD(P)H:plastoquinone, via FMN and iron-sulfur (Fe-S) centers, to quinones in the photosynthetic chain and possibly in a chloroplast respiratory chain. The immediate electron acceptor for the enzyme in this species is believed to be plastoquinone. Couples the redox reaction to proton translocation, and thus conserves the redox energy in a proton gradient. The protein is NAD(P)H-quinone oxidoreductase subunit 4L, chloroplastic of Zea mays (Maize).